Reading from the N-terminus, the 718-residue chain is Nucleolar protein 11 (718 aa).

Position 346 is an N6-methyllysine (Lys346).

In terms of assembly, interacts with UTP4. Interacts with FBL/fibrillarin in a transcription-dependent manner. May associate with the proposed t-UTP subcomplex of the SSU processome containing at least UTP4, WDR43, HEATR1, UTP15, WDR75.

It localises to the nucleus. Its subcellular location is the nucleolus. In terms of biological role, ribosome biogenesis factor. May be required for both optimal rDNA transcription and small subunit (SSU) pre-rRNA processing at sites A', A0, 1 and 2b. This is Nucleolar protein 11 (NOL11) from Pongo abelii (Sumatran orangutan).